The sequence spans 341 residues: tRNA N6-adenosine threonylcarbamoyltransferase (341 aa).

Positions 116 and 120 each coordinate Fe cation. Residues 139-143 (LVSGG), Asp172, Gly185, and Asn274 each bind substrate. Fe cation is bound at residue Asp302.

It belongs to the KAE1 / TsaD family. Fe(2+) is required as a cofactor.

Its subcellular location is the cytoplasm. It catalyses the reaction L-threonylcarbamoyladenylate + adenosine(37) in tRNA = N(6)-L-threonylcarbamoyladenosine(37) in tRNA + AMP + H(+). Its function is as follows. Required for the formation of a threonylcarbamoyl group on adenosine at position 37 (t(6)A37) in tRNAs that read codons beginning with adenine. Is involved in the transfer of the threonylcarbamoyl moiety of threonylcarbamoyl-AMP (TC-AMP) to the N6 group of A37, together with TsaE and TsaB. TsaD likely plays a direct catalytic role in this reaction. The chain is tRNA N6-adenosine threonylcarbamoyltransferase from Vesicomyosocius okutanii subsp. Calyptogena okutanii (strain HA).